A 964-amino-acid chain; its full sequence is Vitamin B12-dependent ribonucleotide reductase (964 aa).

The tract at residues 1 to 21 is disordered; the sequence is MTETASGPARGSRAKGTKAKG. Basic residues predominate over residues 12-21; it reads SRAKGTKAKG. Residues Ser142, 158–159, Gly187, 363–367, and 553–557 contribute to the substrate site; these read AC, NPCSE, and PTGTI. The cysteines at positions 159 and 376 are disulfide-linked. Asn363 (proton acceptor) is an active-site residue. Catalysis depends on Cys365, which acts as the Cysteine radical intermediate. Glu367 functions as the Proton acceptor in the catalytic mechanism.

It belongs to the ribonucleoside diphosphate reductase class-2 family. Adenosylcob(III)alamin is required as a cofactor.

It catalyses the reaction a 2'-deoxyribonucleoside 5'-diphosphate + [thioredoxin]-disulfide + H2O = a ribonucleoside 5'-diphosphate + [thioredoxin]-dithiol. Catalyzes the reduction of ribonucleotides to deoxyribonucleotides. May function to provide a pool of deoxyribonucleotide precursors for DNA repair during oxygen limitation and/or for immediate growth after restoration of oxygen. In Streptomyces avermitilis (strain ATCC 31267 / DSM 46492 / JCM 5070 / NBRC 14893 / NCIMB 12804 / NRRL 8165 / MA-4680), this protein is Vitamin B12-dependent ribonucleotide reductase (nrdJ).